Consider the following 389-residue polypeptide: 8-amino-7-oxononanoate synthase 2 (389 aa).

Residue arginine 21 participates in substrate binding. A pyridoxal 5'-phosphate-binding site is contributed by 108–109 (GY). Residue histidine 133 coordinates substrate. Residues serine 180, 205 to 208 (DDAH), and 234 to 237 (TLSK) contribute to the pyridoxal 5'-phosphate site. Lysine 237 is modified (N6-(pyridoxal phosphate)lysine). Threonine 351 lines the substrate pocket.

This sequence belongs to the class-II pyridoxal-phosphate-dependent aminotransferase family. BioF subfamily. Homodimer. Pyridoxal 5'-phosphate is required as a cofactor.

The enzyme catalyses 6-carboxyhexanoyl-[ACP] + L-alanine + H(+) = (8S)-8-amino-7-oxononanoate + holo-[ACP] + CO2. It functions in the pathway cofactor biosynthesis; biotin biosynthesis. Its function is as follows. Catalyzes the decarboxylative condensation of pimeloyl-[acyl-carrier protein] and L-alanine to produce 8-amino-7-oxononanoate (AON), [acyl-carrier protein], and carbon dioxide. The protein is 8-amino-7-oxononanoate synthase 2 (bioF) of Bacillus subtilis (strain 168).